Consider the following 132-residue polypeptide: Antileukoproteinase (132 aa).

Positions 1 to 24 (MKFSGLFPFLLLALGTLALWAVEG) are cleaved as a signal peptide. Residues 28–76 (EALKAGACPPRKSAQCFGNEKPRCSSDWQCPHKKKCCLDTCGTECLDPV) form the WAP 1 domain. Disulfide bonds link Cys-35/Cys-64, Cys-43/Cys-68, Cys-51/Cys-63, and Cys-57/Cys-72. N-linked (GlcNAc...) asparagine glycosylation is present at Asn-77. The WAP 2 domain maps to 82–130 (VKKKPGTCPVIHGQCLMLKPLNHCETDDQCIGALKCCKAMCGKVCLSPV). Cystine bridges form between Cys-89-Cys-118, Cys-96-Cys-122, Cys-105-Cys-117, and Cys-111-Cys-126.

As to quaternary structure, interacts with GRN; interaction protects progranulin from proteolysis. Detected in bronchoalveolar fluid (at protein level). Detected in large and small intestine, trachea, skin, lung and tongue.

Its subcellular location is the secreted. Acid-stable proteinase inhibitor with strong affinities for trypsin, chymotrypsin, elastase, and cathepsin G. Modulates the inflammatory and immune responses after bacterial infection, and after infection by the intracellular parasite L.major. Down-regulates responses to bacterial lipopolysaccharide (LPS). Plays a role in regulating the activation of NF-kappa-B and inflammatory responses. Has antimicrobial activity against mycobacteria, but not against salmonella. Contributes to normal resistance against infection by M.tuberculosis. Required for normal resistance to infection by L.major. Required for normal wound healing, probably by preventing tissue damage by limiting protease activity. Together with ELANE, required for normal differentiation and proliferation of bone marrow myeloid cells. The sequence is that of Antileukoproteinase (SLPI) from Ovis aries (Sheep).